The chain runs to 418 residues: Pyrophosphate--fructose 6-phosphate 1-phosphotransferase (418 aa).

A diphosphate-binding site is contributed by glycine 13. Asparagine 111 is a Mg(2+) binding site. Residues 139–141 (TID), 187–189 (MGR), glutamate 244, and 295–298 (YLQR) each bind substrate. Aspartate 141 acts as the Proton acceptor in catalysis.

It belongs to the phosphofructokinase type A (PFKA) family. PPi-dependent PFK group II subfamily. Clade 'B2' sub-subfamily. Homodimer. It depends on Mg(2+) as a cofactor.

The protein resides in the cytoplasm. It catalyses the reaction beta-D-fructose 6-phosphate + diphosphate = beta-D-fructose 1,6-bisphosphate + phosphate + H(+). It participates in carbohydrate degradation; glycolysis; D-glyceraldehyde 3-phosphate and glycerone phosphate from D-glucose: step 3/4. With respect to regulation, non-allosteric. Functionally, catalyzes the phosphorylation of D-fructose 6-phosphate, the first committing step of glycolysis. Uses inorganic phosphate (PPi) as phosphoryl donor instead of ATP like common ATP-dependent phosphofructokinases (ATP-PFKs), which renders the reaction reversible, and can thus function both in glycolysis and gluconeogenesis. Consistently, PPi-PFK can replace the enzymes of both the forward (ATP-PFK) and reverse (fructose-bisphosphatase (FBPase)) reactions. This Xanthomonas campestris pv. campestris (strain B100) protein is Pyrophosphate--fructose 6-phosphate 1-phosphotransferase.